Reading from the N-terminus, the 224-residue chain is Ribose-5-phosphate isomerase A (224 aa).

Substrate is bound by residues 26-29 (TGST), 81-84 (DGAD), and 94-97 (KGGG). The Proton acceptor role is filled by Glu-103. Lys-121 contacts substrate.

Belongs to the ribose 5-phosphate isomerase family. Homodimer.

The catalysed reaction is aldehydo-D-ribose 5-phosphate = D-ribulose 5-phosphate. Its pathway is carbohydrate degradation; pentose phosphate pathway; D-ribose 5-phosphate from D-ribulose 5-phosphate (non-oxidative stage): step 1/1. Functionally, catalyzes the reversible conversion of ribose-5-phosphate to ribulose 5-phosphate. The chain is Ribose-5-phosphate isomerase A from Listeria monocytogenes serotype 4b (strain F2365).